A 735-amino-acid chain; its full sequence is MAKINTQHSYPGMHGLSVRTTDEDIERIENGFIRTHSLCEDTSSELQRVISMEGRHLSGSQTSPFTGRGAMARLSRFVVSLRSWATRHLHHEDQRPDSFLERIRGPELVEVSSRQSNIRSFLGIREQPGGVNGPWPLARFNVNFSNNTNEDKKEEKKEVKEEKKEEKKEEKKEEKKDDKKDDKKDDKKDDKKKEEQKKEVFVIDPSSNMYYNWLTIIAAPVFYNWCMLICRACFDELQIDHIKLWLFLDYCSDIIYVFDMFVRFRTGFLEQGLLVKDEKKLRDHYTQTVQFKLDVLSLLPTDLAYLKLGLNYPELRFNRLLRIARLFEFFDRTETRTNYPNMFRIGNLVLYILIIIHWNACIYFAISKVIGFGTDSWVYPNVSIPEYGRLSRKYIYSLYWSTLTLTTIGETPPPVKDEEYLFVVIDFLVGVLIFATIVGNVGSMISNMNASRAEFQAKVDSIKQYMHFRKVTKDLEARVIKWFDYLWTNKKTVDEKEVLKNLPDKLKAEIAINVHLDTLKKVRIFQDCEAGLLIELVLKLKPTVFSPGDYICKKGDIGREMYIIKEGKLAVVADDGITQFVVLSDGSYFGEISILNIKGSKSGNRRTANIRSIGYSDLFCLSKDDLMEALTEYPEAKKALEEKGRQILMKDNLIDEEAAKAGADPKDLEEKIDRLETALDTLQTRFARLLAEYSSSQQKVKQRLARVETRVKKYGSGSLSVGEPEPEKPEEQKKD.

Over M1–L214 the chain is Cytoplasmic. Residues V142–K191 are disordered. The span at N149–K191 shows a compositional bias: basic and acidic residues. Residues T215–E236 traverse the membrane as a helical segment. Topologically, residues L237–L246 are extracellular. The helical transmembrane segment at F247 to G267 threads the bilayer. Over F268–K292 the chain is Cytoplasmic. Residues L293–N311 traverse the membrane as a helical segment. The Extracellular segment spans residues Y312–R316. Residues F317 to T335 traverse the membrane as a helical segment. At R336 to M342 the chain is on the cytoplasmic side. A helical membrane pass occupies residues F343–I366. Topologically, residues S367–R389 are extracellular. The next 2 membrane-spanning stretches (helical) occupy residues L390–V424 and I425–N449. Over A450–D735 the chain is Cytoplasmic. 3',5'-cyclic GMP-binding positions include L532–I654, E591, and R606. A disordered region spans residues G715–D735. Over residues E725–D735 the composition is skewed to basic and acidic residues.

It belongs to the cyclic nucleotide-gated cation channel (TC 1.A.1.5) family.

The protein resides in the membrane. Its function is as follows. Visual signal transduction is mediated by a G-protein coupled cascade using cGMP as second messenger. This protein can be activated by cyclic GMP which leads to an opening of the cation channel and thereby causing a depolarization of cone photoreceptors. This Gallus gallus (Chicken) protein is Cyclic nucleotide-gated channel cone photoreceptor subunit alpha.